We begin with the raw amino-acid sequence, 355 residues long: Capsid protein VP1/VP2 (355 aa).

Positions 1-21 (MADSTTMEHDGRGTKRKREAD) are enriched in basic and acidic residues. The disordered stretch occupies residues 1 to 41 (MADSTTMEHDGRGTKRKREADGGSGQGVGKGNSNAVKEGYG).

It belongs to the parvoviridae capsid protein family.

The protein resides in the virion. Capsid protein self-assembles to form an icosahedral capsid with a T=1 symmetry, about 22 nm in diameter, and consisting of 60 copies of size variants of the capsid proteins, which differ in the N-terminushe capsid encapsulates the genomic ssDNA. Capsid proteins are responsible for the attachment to host cell receptors. This attachment induces virion internalization predominantly through clathrin-dependent endocytosis. This chain is Capsid protein VP1/VP2 (VP), found in Aedes albopictus densovirus (isolate Boublik/1994) (AalDNV).